We begin with the raw amino-acid sequence, 308 residues long: Glutamyl-Q tRNA(Asp) synthetase (308 aa).

Residues 19–23 (RFAPS) and Glu55 contribute to the L-glutamate site. The 'HIGH' region motif lies at 22–32 (PSPSGELHFGS). Zn(2+) contacts are provided by Cys111, Cys113, Tyr125, and Cys129. Residues Tyr182 and Arg200 each contribute to the L-glutamate site. Positions 238 to 242 (KLSKQ) match the 'KMSKS' region motif. Residue Lys241 coordinates ATP.

Belongs to the class-I aminoacyl-tRNA synthetase family. GluQ subfamily. Zn(2+) is required as a cofactor.

Functionally, catalyzes the tRNA-independent activation of glutamate in presence of ATP and the subsequent transfer of glutamate onto a tRNA(Asp). Glutamate is transferred on the 2-amino-5-(4,5-dihydroxy-2-cyclopenten-1-yl) moiety of the queuosine in the wobble position of the QUC anticodon. This chain is Glutamyl-Q tRNA(Asp) synthetase, found in Escherichia coli (strain K12 / MC4100 / BW2952).